Here is a 1372-residue protein sequence, read N- to C-terminus: Putative Polyprotein CP (1372 aa).

Coiled coils occupy residues 126-153 (NKENLERQELLLRQINELKEEIKSLKNI) and 299-350 (EKQK…EELD). The interval 372 to 398 (SESSEINEISDNETEQISGSDSDYNNE) is disordered. The span at 386–398 (EQISGSDSDYNNE) shows a compositional bias: polar residues. The CCHC-type zinc finger occupies 739-756 (CKCYNCGEEGHISPNCKK). Residues 1162–1189 (DDRTNIQREKDQIEKADHNLELQKELNN) adopt a coiled-coil conformation.

The protein resides in the virion. This Cassava vein mosaic virus (CsVMV) protein is Putative Polyprotein CP.